We begin with the raw amino-acid sequence, 396 residues long: Ornithine aminotransferase (396 aa).

The residue at position 255 (lysine 255) is an N6-(pyridoxal phosphate)lysine.

Belongs to the class-III pyridoxal-phosphate-dependent aminotransferase family. OAT subfamily. Pyridoxal 5'-phosphate is required as a cofactor.

Its subcellular location is the cytoplasm. It carries out the reaction a 2-oxocarboxylate + L-ornithine = L-glutamate 5-semialdehyde + an L-alpha-amino acid. It participates in amino-acid biosynthesis; L-proline biosynthesis; L-glutamate 5-semialdehyde from L-ornithine: step 1/1. In terms of biological role, catalyzes the interconversion of ornithine to glutamate semialdehyde. This Staphylococcus epidermidis (strain ATCC 12228 / FDA PCI 1200) protein is Ornithine aminotransferase.